A 650-amino-acid polypeptide reads, in one-letter code: L-aspartate N-monooxygenase (nitrosuccinate-forming) (650 aa).

It belongs to the nitrosuccinic acid synthase family. It depends on FAD as a cofactor.

The catalysed reaction is L-aspartate + 3 NADPH + 3 O2 + 2 H(+) = 2-nitrobutanedioate + 3 NADP(+) + 4 H2O. Its function is as follows. Involved in the biosynthesis of desferrioxamine derivatives which have iron-binding properties and may act as siderophores. Catalyzes the iterative oxidation of L-aspartic acid to nitrosuccinic acid (2-nitrobutanedioate) via N-hydroxyaspartic acid and nitrososuccinic acid. This chain is L-aspartate N-monooxygenase (nitrosuccinate-forming), found in Streptomyces davaonensis (strain DSM 101723 / JCM 4913 / KCC S-0913 / 768).